The sequence spans 844 residues: Saxiphilin (844 aa).

A signal peptide spans 1–19; that stretch reads MAPTFQTALFFTIISLSFA. Residues 26-106 form the Transferrin-like 1; first part domain; that stretch reads VRWCAISDLE…IAEPYSSNRD (81 aa). Cystine bridges form between Cys-29–Cys-64, Cys-39–Cys-55, Cys-110–Cys-130, Cys-141–Cys-148, Cys-150–Cys-172, Cys-180–Cys-202, Cys-222–Cys-244, Cys-277–Cys-360, Cys-322–Cys-335, Cys-332–Cys-343, Cys-388–Cys-402, Cys-495–Cys-527, Cys-505–Cys-518, Cys-552–Cys-839, Cys-570–Cys-799, Cys-607–Cys-685, Cys-641–Cys-655, Cys-652–Cys-668, and Cys-725–Cys-739. Thyroglobulin type-1 domains are found at residues 107–172 and 177–244; these read LQKC…RATC and LPKC…PATC. Residues 109-249 form an absent in transferrins region; it reads KCLKERQQAL…IPATCQKHDL (141 aa). The 238-residue stretch at 245 to 482 folds into the Transferrin-like 1; second part domain; that stretch reads QKHDLVTTCH…LFHAMKALTG (238 aa). A Transferrin-like 2 domain is found at 492–828; it reads VRWCTINKLE…YYTTVYGASR (337 aa).

Belongs to the transferrin family. Monomer. As to expression, plasma. Highest levels of transcripts found in the liver, the lung, the pancreas and the brain.

Its subcellular location is the secreted. Functionally, binds specifically to the neurotoxin saxitoxin. Its physiological role may be to transport or sequester an endogenous organic molecule other than Fe(3+). It may participate in a detoxification mechanism for neutralizing a microbial toxin. The protein is Saxiphilin of Aquarana catesbeiana (American bullfrog).